Consider the following 218-residue polypeptide: uncharacterized protein (218 aa).

7 helical membrane-spanning segments follow: residues 9–29, 42–62, 67–87, 107–127, 134–154, 159–179, and 192–212; these read LLVI…VIAM, AIIL…SAAV, IPFL…QLLI, TIVL…AGAS, VVIG…LIHI, IPLL…EMIV, and GTVE…ASIY.

It belongs to the TerC family.

The protein resides in the cell membrane. This is an uncharacterized protein from Bacillus subtilis (strain 168).